The primary structure comprises 712 residues: Polyribonucleotide nucleotidyltransferase (712 aa).

Mg(2+) contacts are provided by aspartate 487 and aspartate 493. Residues 554–613 (PRIHTMKISVEKIKDVIGKGGAVIRQLTEETGTTIEIEDDGTIKIAATDGDQAKEAIRRI) form the KH domain. An S1 motif domain is found at 623–691 (GVIYTGKVAR…RQGRVRLSMK (69 aa)).

Belongs to the polyribonucleotide nucleotidyltransferase family. Component of the RNA degradosome, which is a multiprotein complex involved in RNA processing and mRNA degradation. Requires Mg(2+) as cofactor.

The protein localises to the cytoplasm. The catalysed reaction is RNA(n+1) + phosphate = RNA(n) + a ribonucleoside 5'-diphosphate. Its function is as follows. Involved in mRNA degradation. Catalyzes the phosphorolysis of single-stranded polyribonucleotides processively in the 3'- to 5'-direction. The chain is Polyribonucleotide nucleotidyltransferase from Vibrio cholerae serotype O1 (strain ATCC 39541 / Classical Ogawa 395 / O395).